The following is a 147-amino-acid chain: S-protein homolog 10 (147 aa).

A signal peptide spans Met-1–Ala-20.

Belongs to the plant self-incompatibility (S1) protein family.

It is found in the secreted. In Arabidopsis thaliana (Mouse-ear cress), this protein is S-protein homolog 10.